Here is a 95-residue protein sequence, read N- to C-terminus: Aspartyl/glutamyl-tRNA(Asn/Gln) amidotransferase subunit C (95 aa).

The protein belongs to the GatC family. As to quaternary structure, heterotrimer of A, B and C subunits.

The enzyme catalyses L-glutamyl-tRNA(Gln) + L-glutamine + ATP + H2O = L-glutaminyl-tRNA(Gln) + L-glutamate + ADP + phosphate + H(+). It carries out the reaction L-aspartyl-tRNA(Asn) + L-glutamine + ATP + H2O = L-asparaginyl-tRNA(Asn) + L-glutamate + ADP + phosphate + 2 H(+). Allows the formation of correctly charged Asn-tRNA(Asn) or Gln-tRNA(Gln) through the transamidation of misacylated Asp-tRNA(Asn) or Glu-tRNA(Gln) in organisms which lack either or both of asparaginyl-tRNA or glutaminyl-tRNA synthetases. The reaction takes place in the presence of glutamine and ATP through an activated phospho-Asp-tRNA(Asn) or phospho-Glu-tRNA(Gln). In Nitrosospira multiformis (strain ATCC 25196 / NCIMB 11849 / C 71), this protein is Aspartyl/glutamyl-tRNA(Asn/Gln) amidotransferase subunit C.